A 91-amino-acid polypeptide reads, in one-letter code: UPF0147 protein APE_2336a (91 aa).

Belongs to the UPF0147 family.

The polypeptide is UPF0147 protein APE_2336a (Aeropyrum pernix (strain ATCC 700893 / DSM 11879 / JCM 9820 / NBRC 100138 / K1)).